The chain runs to 352 residues: Protein RecA (352 aa).

67–74 (GPESSGKT) provides a ligand contact to ATP. The segment at 330-352 (STPKPEAESQEKAAAAQDDDSLV) is disordered.

This sequence belongs to the RecA family.

The protein resides in the cytoplasm. Functionally, can catalyze the hydrolysis of ATP in the presence of single-stranded DNA, the ATP-dependent uptake of single-stranded DNA by duplex DNA, and the ATP-dependent hybridization of homologous single-stranded DNAs. It interacts with LexA causing its activation and leading to its autocatalytic cleavage. This Chromohalobacter salexigens (strain ATCC BAA-138 / DSM 3043 / CIP 106854 / NCIMB 13768 / 1H11) protein is Protein RecA.